The primary structure comprises 124 residues: MIRELLLIGVGGFFGAIFRYLISGIVPVKFGLPTGTLAVNLIGSFILGFLLYCSLFAPIPTEYKLFIGTGFCGALTTFSTFSYETFVLVDEGLLFKALLNILINVVGCLIMVYFGRVLALAIFR.

4 helical membrane-spanning segments follow: residues 6–26 (LLIG…SGIV), 37–57 (LAVN…SLFA), 69–89 (TGFC…FVLV), and 92–112 (GLLF…LIMV). Glycine 73 and threonine 76 together coordinate Na(+).

It belongs to the fluoride channel Fluc/FEX (TC 1.A.43) family.

Its subcellular location is the cell membrane. The enzyme catalyses fluoride(in) = fluoride(out). With respect to regulation, na(+) is not transported, but it plays an essential structural role and its presence is essential for fluoride channel function. In terms of biological role, fluoride-specific ion channel. Important for reducing fluoride concentration in the cell, thus reducing its toxicity. This Methanocaldococcus jannaschii (strain ATCC 43067 / DSM 2661 / JAL-1 / JCM 10045 / NBRC 100440) (Methanococcus jannaschii) protein is Fluoride-specific ion channel FluC.